The following is a 571-amino-acid chain: Septation ring formation regulator EzrA (571 aa).

The Extracellular portion of the chain corresponds to 1–3; that stretch reads MYY. Residues 4 to 22 form a helical membrane-spanning segment; that stretch reads MLIGFIIVVIAIISAGYIL. Residues 23-571 lie on the Cytoplasmic side of the membrane; sequence KRKHYQRINE…ESKVSVDDIE (549 aa). 5 coiled-coil regions span residues 169 to 214, 249 to 298, 326 to 374, 400 to 438, and 474 to 529; these read VETK…AQME, AQME…DTLE, DALA…ASGE, KFAEELRSLRKDELEARDDAERMRRAIVTLDRKMERERL, and TQDW…ENHF.

This sequence belongs to the EzrA family.

The protein localises to the cell membrane. Functionally, negative regulator of FtsZ ring formation; modulates the frequency and position of FtsZ ring formation. Inhibits FtsZ ring formation at polar sites. Interacts either with FtsZ or with one of its binding partners to promote depolymerization. This chain is Septation ring formation regulator EzrA, found in Listeria welshimeri serovar 6b (strain ATCC 35897 / DSM 20650 / CCUG 15529 / CIP 8149 / NCTC 11857 / SLCC 5334 / V8).